The following is a 458-amino-acid chain: Vacuolar basic amino acid transporter 3 (458 aa).

The Cytoplasmic portion of the chain corresponds to 1–9 (MNMLIVGRV). A helical membrane pass occupies residues 10 to 30 (VASVGGSGLQTLCFVIGCTMV). The Vacuolar portion of the chain corresponds to 31-36 (GERSRP). The chain crosses the membrane as a helical span at residues 37 to 57 (LVISILSCAFAVAAIVGPIIG). At 58–67 (GAFTTHVTWR) the chain is on the cytoplasmic side. Residues 68-88 (WCFYINLPIGGLAIIMFLLTY) traverse the membrane as a helical segment. Residues 89 to 132 (KAENKGILQQIKDAIGTISSFTFSKFRHQVNFKRLMNGIIFKFD) lie on the Vacuolar side of the membrane. Residues 133–153 (FFGFALCSAGLVLFLLGLTFG) traverse the membrane as a helical segment. Over 154–163 (GNKYSWNSGQ) the chain is Cytoplasmic. The helical transmembrane segment at 164–184 (VIAYLVLGVLLFIFSLVYDFF) threads the bilayer. At 185–205 (LFDKFNPEPDNISYRPLLLRR) the chain is on the vacuolar side. Residue asparagine 195 is glycosylated (N-linked (GlcNAc...) asparagine). A helical membrane pass occupies residues 206–226 (LVAKPAIIIINMVTFLLCTGY). Topologically, residues 227–248 (NGQMIYSVQFFQLIFASSAWKA) are cytoplasmic. The helical transmembrane segment at 249–269 (GLHLIPIVITNVIAAIASGVI) threads the bilayer. At 270–277 (TKKLGLVK) the chain is on the vacuolar side. A helical membrane pass occupies residues 278–298 (PLLIFGGVLGVIGAGLMTLMT). The Cytoplasmic portion of the chain corresponds to 299–306 (NTSTKSTQ). The chain crosses the membrane as a helical span at residues 307–327 (IGVLLLPGFSLGFALQASLMS). Residues 328–415 (AQLQITKDRP…STIGNILSDS (88 aa)) are Vacuolar-facing. A helical membrane pass occupies residues 416-436 (IKNVFWMDLGFYALGFLFCSF). Topologically, residues 437–458 (SSNKKLIIPKKDETPEDNLEDK) are cytoplasmic.

This sequence belongs to the major facilitator superfamily.

The protein resides in the vacuole membrane. In terms of biological role, transporter required for vacuolar uptake of histidine and lysine. This Saccharomyces cerevisiae (strain ATCC 204508 / S288c) (Baker's yeast) protein is Vacuolar basic amino acid transporter 3 (VBA3).